The sequence spans 141 residues: MAIERTLSIIKPDAVAKNVIGQIYSRFEGAGLKIVASRMAHLSRADAEKFYAVHAARPFFKDLVDFMISGPVMIQVLEGEGAILKNRDLMGATDPKKAEKGTIRADFADSIDANAVHGSDAAETAAVEIAFFFPEMNVYSR.

ATP-binding residues include K11, F59, R87, T93, R104, and N114. Catalysis depends on H117, which acts as the Pros-phosphohistidine intermediate.

It belongs to the NDK family. Homotetramer. Mg(2+) is required as a cofactor.

Its subcellular location is the cytoplasm. It carries out the reaction a 2'-deoxyribonucleoside 5'-diphosphate + ATP = a 2'-deoxyribonucleoside 5'-triphosphate + ADP. It catalyses the reaction a ribonucleoside 5'-diphosphate + ATP = a ribonucleoside 5'-triphosphate + ADP. Major role in the synthesis of nucleoside triphosphates other than ATP. The ATP gamma phosphate is transferred to the NDP beta phosphate via a ping-pong mechanism, using a phosphorylated active-site intermediate. This is Nucleoside diphosphate kinase from Burkholderia cenocepacia (strain HI2424).